The sequence spans 165 residues: MDYSTSDLCDHFADVVDVLEPMFINFGGRHSFGGRIKTVKCFENNELIRELLSQDGTDLVLLIDGGGSTRRALIDIELAELALENNWQGIIVYGAVRHVDEIEELDLGIQAIASIPVAADSQGAGEDGIGVNFAGVSFFDDDFIYADSTGIVLSAEELELEIVEI.

It belongs to the RraA family. In terms of assembly, homotrimer. Binds to both RNA-binding sites in the C-terminal region of Rne and to RhlB.

The protein localises to the cytoplasm. Globally modulates RNA abundance by binding to RNase E (Rne) and regulating its endonucleolytic activity. Can modulate Rne action in a substrate-dependent manner by altering the composition of the degradosome. Modulates RNA-binding and helicase activities of the degradosome. This Pseudoalteromonas translucida (strain TAC 125) protein is Regulator of ribonuclease activity A.